The following is a 214-amino-acid chain: Killer cell lectin-like receptor subfamily B member 1 (214 aa).

The Cytoplasmic portion of the chain corresponds to 1-42 (MDAPVLYAELNLAETRGLRCTSAPSLPQDACQGPGWHRVALK). Residues 43 to 63 (LGCAGLIFLLMVLSVLVGFLV) form a helical; Signal-anchor for type II membrane protein membrane-spanning segment. Residues 64–214 (QKPLIEKCSV…WICQKTLKHV (151 aa)) lie on the Extracellular side of the membrane. Residues 98–208 (HCDKCLFTSQ…CSSDNHWICQ (111 aa)) form the C-type lectin domain. Intrachain disulfides connect C119–C207 and C186–C199.

The protein resides in the membrane. The protein is Killer cell lectin-like receptor subfamily B member 1 (Klrb1) of Mus musculus (Mouse).